Here is a 156-residue protein sequence, read N- to C-terminus: Small ribosomal subunit protein uS7 (156 aa).

This sequence belongs to the universal ribosomal protein uS7 family. Part of the 30S ribosomal subunit. Contacts proteins S9 and S11.

Functionally, one of the primary rRNA binding proteins, it binds directly to 16S rRNA where it nucleates assembly of the head domain of the 30S subunit. Is located at the subunit interface close to the decoding center, probably blocks exit of the E-site tRNA. The protein is Small ribosomal subunit protein uS7 of Moorella thermoacetica (strain ATCC 39073 / JCM 9320).